The primary structure comprises 169 residues: S-ribosylhomocysteine lyase (169 aa).

Residues His54, His58, and Cys128 each coordinate Fe cation.

Belongs to the LuxS family. Homodimer. Fe cation serves as cofactor.

It carries out the reaction S-(5-deoxy-D-ribos-5-yl)-L-homocysteine = (S)-4,5-dihydroxypentane-2,3-dione + L-homocysteine. In terms of biological role, involved in the synthesis of autoinducer 2 (AI-2) which is secreted by bacteria and is used to communicate both the cell density and the metabolic potential of the environment. The regulation of gene expression in response to changes in cell density is called quorum sensing. Catalyzes the transformation of S-ribosylhomocysteine (RHC) to homocysteine (HC) and 4,5-dihydroxy-2,3-pentadione (DPD). The sequence is that of S-ribosylhomocysteine lyase from Shewanella baltica (strain OS223).